A 1066-amino-acid chain; its full sequence is Zinc finger and BTB domain-containing protein 21 (1066 aa).

The 67-residue stretch at 30 to 96 (CDVLLIVGDQ…IYSSSLFVEK (67 aa)) folds into the BTB domain. Residues 30-96 (CDVLLIVGDQ…IYSSSLFVEK (67 aa)) form a mediates homodimerization region. Lys40 participates in a covalent cross-link: Glycyl lysine isopeptide (Lys-Gly) (interchain with G-Cter in SUMO1); alternate. Lys40 participates in a covalent cross-link: Glycyl lysine isopeptide (Lys-Gly) (interchain with G-Cter in SUMO2); alternate. The segment covering 154–177 (SRNEAQGKTVSQNQPDVSHTSRPS) has biased composition (polar residues). Residues 154–196 (SRNEAQGKTVSQNQPDVSHTSRPSPSIAVKANTNKPHVPKPIE) form a disordered region. Residues Lys255, Lys266, Lys273, Lys312, and Lys337 each participate in a glycyl lysine isopeptide (Lys-Gly) (interchain with G-Cter in SUMO2) cross-link. 2 positions are modified to phosphoserine: Ser345 and Ser381. Lys383 participates in a covalent cross-link: Glycyl lysine isopeptide (Lys-Gly) (interchain with G-Cter in SUMO2). The span at 388–399 (DCSEKTALDDRP) shows a compositional bias: basic and acidic residues. Disordered stretches follow at residues 388–442 (DCSE…DPSD), 454–485 (TAAA…AKRR), and 498–525 (KVNE…ADFP). Residues Ser411 and Ser422 each carry the phosphoserine modification. Residue Lys430 forms a Glycyl lysine isopeptide (Lys-Gly) (interchain with G-Cter in SUMO2) linkage. Thr431 is subject to Phosphothreonine. 3 positions are modified to phosphoserine: Ser434, Ser435, and Ser438. Positions 466–478 (LSLKTEDDQKDMS) are enriched in basic and acidic residues. Residues Lys469 and Lys475 each participate in a glycyl lysine isopeptide (Lys-Gly) (interchain with G-Cter in SUMO2) cross-link. C2H2-type zinc fingers lie at residues 546–569 (FKCK…NMYH) and 575–598 (YACD…QTQH). A Phosphoserine modification is found at Ser605. Glycyl lysine isopeptide (Lys-Gly) (interchain with G-Cter in SUMO2) cross-links involve residues Lys617, Lys643, and Lys659. Residues 670-692 (YICTYCGKAYRFLSQFKQHIKMH) form a C2H2-type 3 zinc finger. A Glycyl lysine isopeptide (Lys-Gly) (interchain with G-Cter in SUMO2) cross-link involves residue Lys702. Ser714 carries the post-translational modification Phosphoserine. The C2H2-type 4; atypical zinc-finger motif lies at 748–770 (AVCPYCSLRFFSPELKQEHESKC). Glycyl lysine isopeptide (Lys-Gly) (interchain with G-Cter in SUMO2) cross-links involve residues Lys763 and Lys785. The C2H2-type 5 zinc-finger motif lies at 775 to 798 (LTCLECMRTFKSSFSIWRHQVEVH). Positions 806-840 (TENFSLPVLDHNGDVTGSSRPQSQPEPNKVNHIVT) are disordered. The segment covering 820-831 (VTGSSRPQSQPE) has biased composition (polar residues). Residue Lys875 forms a Glycyl lysine isopeptide (Lys-Gly) (interchain with G-Cter in SUMO2) linkage. Lys879 is covalently cross-linked (Glycyl lysine isopeptide (Lys-Gly) (interchain with G-Cter in SUMO1); alternate). Residue Lys879 forms a Glycyl lysine isopeptide (Lys-Gly) (interchain with G-Cter in SUMO2); alternate linkage. Residues 879 to 906 (KEEPVEEAEEEAPEASTAPKEAGPSKEA) are disordered. The segment covering 882-891 (PVEEAEEEAP) has biased composition (acidic residues). The C2H2-type 6; atypical zinc finger occupies 909-932 (WPCEKCGKMFTVHKQLERHQELLC). Lys935 is covalently cross-linked (Glycyl lysine isopeptide (Lys-Gly) (interchain with G-Cter in SUMO2)). The segment at 937–959 (FICHVCNKAFRTNFRLWSHFQSH) adopts a C2H2-type 7 zinc-finger fold. The tract at residues 963-1014 (ASEESAHKESEVCPVPTNSPSPPPLPPPPPLPKIQPLEPDSPTGLSENPTPA) is disordered. Positions 979-995 (TNSPSPPPLPPPPPLPK) are enriched in pro residues. Ser1003 is subject to Phosphoserine. The C2H2-type 8 zinc-finger motif lies at 1043-1065 (FMCKLCHRTFKTAFSLWSHEQTH).

As to quaternary structure, homodimer. Interacts with ZBTB14. As to expression, ubiquitous in fetal and adult tissues.

The protein localises to the nucleus. Its function is as follows. Acts as a transcription repressor. The sequence is that of Zinc finger and BTB domain-containing protein 21 (ZBTB21) from Homo sapiens (Human).